The chain runs to 530 residues: Ubiquitin carboxyl-terminal hydrolase 17-like protein 10 (530 aa).

A USP domain is found at 80-375 (AGLQNMGNTC…QAYVLFYIQK (296 aa)). The active-site Nucleophile is C89. H334 (proton acceptor) is an active-site residue. 2 stretches are compositionally biased toward basic and acidic residues: residues 382–392 (SESVSRGREPR) and 398–410 (DTDR…ELKR). 2 disordered regions span residues 382-410 (SESV…ELKR) and 477-530 (NHHP…LVCQ). Over residues 484 to 495 (SSLLNLSSTTPT) the composition is skewed to low complexity. Polar residues predominate over residues 496 to 505 (DQESMNTGTL). The segment covering 510 to 524 (GRTRRSKGKNKHSKR) has biased composition (basic residues).

The protein belongs to the peptidase C19 family. USP17 subfamily.

The protein resides in the nucleus. It is found in the endoplasmic reticulum. It carries out the reaction Thiol-dependent hydrolysis of ester, thioester, amide, peptide and isopeptide bonds formed by the C-terminal Gly of ubiquitin (a 76-residue protein attached to proteins as an intracellular targeting signal).. In terms of biological role, deubiquitinating enzyme that removes conjugated ubiquitin from specific proteins to regulate different cellular processes that may include cell proliferation, progression through the cell cycle, apoptosis, cell migration, and the cellular response to viral infection. The protein is Ubiquitin carboxyl-terminal hydrolase 17-like protein 10 (USP17L10) of Homo sapiens (Human).